The sequence spans 280 residues: Phosphonates import ATP-binding protein PhnC 1 (280 aa).

One can recognise an ABC transporter domain in the interval 3–247 (FRLDAASVSY…LLRELYASES (245 aa)). 36–43 (GPSGAGKT) contributes to the ATP binding site.

The protein belongs to the ABC transporter superfamily. Phosphonates importer (TC 3.A.1.9.1) family. As to quaternary structure, the complex is composed of two ATP-binding proteins (PhnC), two transmembrane proteins (PhnE) and a solute-binding protein (PhnD).

The protein localises to the cell inner membrane. The enzyme catalyses phosphonate(out) + ATP + H2O = phosphonate(in) + ADP + phosphate + H(+). In terms of biological role, part of the ABC transporter complex PhnCDE involved in phosphonates import. Responsible for energy coupling to the transport system. The chain is Phosphonates import ATP-binding protein PhnC 1 from Cupriavidus necator (strain ATCC 17699 / DSM 428 / KCTC 22496 / NCIMB 10442 / H16 / Stanier 337) (Ralstonia eutropha).